The chain runs to 499 residues: Endoglucanase 3 (499 aa).

Residues 1-19 (MALLRCLFLLAVLLPHRNA) form the signal peptide. The Nucleophile role is filled by Asp-88. Catalysis depends on residues His-416, Asp-467, and Glu-476.

Belongs to the glycosyl hydrolase 9 (cellulase E) family. As to expression, expressed in flowers.

It localises to the secreted. The catalysed reaction is Endohydrolysis of (1-&gt;4)-beta-D-glucosidic linkages in cellulose, lichenin and cereal beta-D-glucans.. This Oryza sativa subsp. japonica (Rice) protein is Endoglucanase 3 (GLU8).